A 293-amino-acid polypeptide reads, in one-letter code: Bifunctional protein FolD (293 aa).

Residues G162–S164 and I227 each bind NADP(+).

It belongs to the tetrahydrofolate dehydrogenase/cyclohydrolase family. Homodimer.

It catalyses the reaction (6R)-5,10-methylene-5,6,7,8-tetrahydrofolate + NADP(+) = (6R)-5,10-methenyltetrahydrofolate + NADPH. It carries out the reaction (6R)-5,10-methenyltetrahydrofolate + H2O = (6R)-10-formyltetrahydrofolate + H(+). It functions in the pathway one-carbon metabolism; tetrahydrofolate interconversion. Its function is as follows. Catalyzes the oxidation of 5,10-methylenetetrahydrofolate to 5,10-methenyltetrahydrofolate and then the hydrolysis of 5,10-methenyltetrahydrofolate to 10-formyltetrahydrofolate. This is Bifunctional protein FolD from Metamycoplasma arthritidis (strain 158L3-1) (Mycoplasma arthritidis).